A 569-amino-acid chain; its full sequence is Melanophilin (569 aa).

The region spanning 4-124 (KLDLSKLTDD…MGSLEWYYGH (121 aa)) is the RabBD domain. The segment at 58–112 (HLNETHCARCLQPYRLLVAPKRQCLDCHLFTCQDCSHAHPEEEGWLCDPCHLARV) adopts an FYVE-type zinc-finger fold. The tract at residues 143-430 (GRLQGGGGPE…MQPGRTTDQE (288 aa)) is disordered. Basic and acidic residues-rich tracts occupy residues 352-362 (ETLKRKLEEMT) and 379-390 (EEEAGLNRKTSI). The segment covering 404-415 (SGQTSRQETSPR) has biased composition (polar residues). Residues 431 to 465 (LLELEDRVAVTASEVQQVESEVSNIKSKIAALQAA) adopt a coiled-coil conformation. A disordered region spans residues 490 to 569 (GRLGQTPKDP…FAKPVMTQRP (80 aa)). Residues 526 to 535 (SQDKAGDSFD) show a composition bias toward basic and acidic residues.

As to quaternary structure, binds RAB27A that has been activated by GTP-binding via its N-terminus. Binds MYO5A via its C-terminal coiled coil domain.

It is found in the melanosome. Its function is as follows. Rab effector protein involved in melanosome transport. Serves as link between melanosome-bound RAB27A and the motor protein MYO5A. The polypeptide is Melanophilin (MLPH) (Felis catus (Cat)).